The sequence spans 583 residues: Sensor protein SrrB (583 aa).

The Cytoplasmic segment spans residues 1-11 (MMSRLNSVVIK). Residues 12–32 (LWLTIILIVTTVLILLSIALI) traverse the membrane as a helical segment. Over 33 to 174 (TFMQYYFTQE…SIEDTNNAIT (142 aa)) the chain is Extracellular. A helical transmembrane segment spans residues 175 to 195 (IITIITAVIFLTITTVFAFFL). At 196 to 583 (SSRITKPLRR…TFIIKLPKPE (388 aa)) the chain is on the cytoplasmic side. The HAMP domain occupies 197–249 (SRITKPLRRLRDQATRVSEGDYSYKPSVTTKDEIGQLSQAFNQMSTEIEEHVD). Residues 366-583 (NVSHELRTPI…TFIIKLPKPE (218 aa)) form the Histidine kinase domain. Residue His-369 is modified to Phosphohistidine; by autocatalysis.

It is found in the cell membrane. The catalysed reaction is ATP + protein L-histidine = ADP + protein N-phospho-L-histidine.. Its function is as follows. Member of the two-component regulatory system SrrA/SrrB, which is involved in the global regulation of staphylococcal virulence factors in response to environmental oxygen levels as well as biofilm formation. Also plays an essential role in host-derived nitric oxide resistance by regulating hmp/flavohemoglobin, an enzyme that detoxifies nitric oxide by converting it to nitrate. Functions as a sensor protein kinase which is autophosphorylated at a histidine residue and transfers its phosphate group to SrrA. In turn, SrrA binds to the upstream promoter regions of the target genes to positively and negatively regulate their expression. The protein is Sensor protein SrrB (srrB) of Staphylococcus aureus (strain Mu50 / ATCC 700699).